A 320-amino-acid chain; its full sequence is NAD kinase (320 aa).

The active-site Proton acceptor is the aspartate 96. Residues 96-97 (DG), arginine 101, 170-171 (NE), aspartate 200, and 211-216 (TAYAFS) each bind NAD(+).

The protein belongs to the NAD kinase family. A divalent metal cation serves as cofactor.

The protein resides in the cytoplasm. The enzyme catalyses NAD(+) + ATP = ADP + NADP(+) + H(+). Involved in the regulation of the intracellular balance of NAD and NADP, and is a key enzyme in the biosynthesis of NADP. Catalyzes specifically the phosphorylation on 2'-hydroxyl of the adenosine moiety of NAD to yield NADP. The sequence is that of NAD kinase from Rhodococcus jostii (strain RHA1).